The following is a 190-amino-acid chain: Acyl-acyl carrier protein thioesterase ATL3, chloroplastic (190 aa).

The N-terminal 49 residues, M1–G49, are a transit peptide targeting the chloroplast. D66 is a catalytic residue.

It belongs to the 4-hydroxybenzoyl-CoA thioesterase family. As to expression, highly expressed in stems and flowers and at lower levels in rosette leaves, cauline leaves and siliques.

Its subcellular location is the plastid. The protein resides in the chloroplast. Functionally, acyl-ACP thioesterase involved in the production of fatty acids and beta-keto fatty acids. Can produce fatty acids of long chain (14:1 and 16:1) and beta-keto fatty acids of medium to long chain (8:0, 10:0, 12:0, 12:1, 14:0 and 16:0) when expressed in a heterologous organism (E.coli). Possesses thioesterase activity for lauroyl-ACP (12:0-ACP) in vitro. May play a role in the generation of long fatty acids in the chloroplast. This chain is Acyl-acyl carrier protein thioesterase ATL3, chloroplastic, found in Arabidopsis thaliana (Mouse-ear cress).